Consider the following 551-residue polypeptide: Small ribosomal subunit protein bS1 (551 aa).

6 consecutive S1 motif domains span residues 21 to 83 (GALV…LSRE), 101 to 167 (GEMV…VSRR), 188 to 256 (GQEI…LGMK), 273 to 343 (NSRV…LGIK), 360 to 430 (DEKI…LGIK), and 447 to 516 (DAVI…VSHK).

It belongs to the bacterial ribosomal protein bS1 family.

Its function is as follows. Binds mRNA; thus facilitating recognition of the initiation point. It is needed to translate mRNA with a short Shine-Dalgarno (SD) purine-rich sequence. The polypeptide is Small ribosomal subunit protein bS1 (rpsA) (Coxiella burnetii (strain RSA 493 / Nine Mile phase I)).